The chain runs to 80 residues: Raniseptin-8 (80 aa).

Positions 1–22 (MAFLKKSLFLVLFLGIVSLSIC) are cleaved as a signal peptide. The propeptide occupies 23–49 (EEEKREGEEEEKQEEENEELSEEELRE). Residues 27–46 (REGEEEEKQEEENEELSEEE) are disordered. Positions 30-44 (EEEEKQEEENEELSE) are enriched in acidic residues.

The protein belongs to the frog skin active peptide (FSAP) family. Dermaseptin subfamily. Expressed by the skin glands.

The protein resides in the secreted. Its function is as follows. Has antibacterial activity. The sequence is that of Raniseptin-8 from Boana raniceps (Chaco tree frog).